A 148-amino-acid chain; its full sequence is Large ribosomal subunit protein bL9 (148 aa).

The protein belongs to the bacterial ribosomal protein bL9 family.

In terms of biological role, binds to the 23S rRNA. This is Large ribosomal subunit protein bL9 from Bacillus cereus (strain G9842).